A 154-amino-acid polypeptide reads, in one-letter code: Endoribonuclease YbeY (154 aa).

Positions 118, 122, and 128 each coordinate Zn(2+).

This sequence belongs to the endoribonuclease YbeY family. It depends on Zn(2+) as a cofactor.

The protein resides in the cytoplasm. Its function is as follows. Single strand-specific metallo-endoribonuclease involved in late-stage 70S ribosome quality control and in maturation of the 3' terminus of the 16S rRNA. The protein is Endoribonuclease YbeY of Macrococcus caseolyticus (strain JCSC5402) (Macrococcoides caseolyticum).